Consider the following 268-residue polypeptide: Imidazole glycerol phosphate synthase subunit HisF (268 aa).

Catalysis depends on residues D12 and D131.

Belongs to the HisA/HisF family. In terms of assembly, heterodimer of HisH and HisF.

Its subcellular location is the cytoplasm. The enzyme catalyses 5-[(5-phospho-1-deoxy-D-ribulos-1-ylimino)methylamino]-1-(5-phospho-beta-D-ribosyl)imidazole-4-carboxamide + L-glutamine = D-erythro-1-(imidazol-4-yl)glycerol 3-phosphate + 5-amino-1-(5-phospho-beta-D-ribosyl)imidazole-4-carboxamide + L-glutamate + H(+). Its pathway is amino-acid biosynthesis; L-histidine biosynthesis; L-histidine from 5-phospho-alpha-D-ribose 1-diphosphate: step 5/9. Functionally, IGPS catalyzes the conversion of PRFAR and glutamine to IGP, AICAR and glutamate. The HisF subunit catalyzes the cyclization activity that produces IGP and AICAR from PRFAR using the ammonia provided by the HisH subunit. The sequence is that of Imidazole glycerol phosphate synthase subunit HisF from Methanoculleus marisnigri (strain ATCC 35101 / DSM 1498 / JR1).